The chain runs to 68 residues: Galectin-10 (68 aa).

Residues 1–68 (EPYLQVDFHT…LSISVLPDKY (68 aa)) form the Galectin domain.

As to quaternary structure, interacts with CEL.

The protein resides in the cytoplasm. The protein localises to the cytosol. It is found in the cytoplasmic granule. Regulates immune responses through the recognition of cell-surface glycans. Essential for the anergy and suppressive function of CD25-positive regulatory T-cells (Treg). This Pongo pygmaeus (Bornean orangutan) protein is Galectin-10 (CLC).